The sequence spans 289 residues: Serine/threonine-protein phosphatase Pgam5, mitochondrial (289 aa).

The chain crosses the membrane as a helical span at residues L7–L23.

It belongs to the phosphoglycerate mutase family. BPG-dependent PGAM subfamily. Interacts with Pk92B/ASK1.

The protein localises to the mitochondrion outer membrane. It catalyses the reaction O-phospho-L-seryl-[protein] + H2O = L-seryl-[protein] + phosphate. The catalysed reaction is O-phospho-L-threonyl-[protein] + H2O = L-threonyl-[protein] + phosphate. Displays phosphatase activity for serine/threonine residues, and dephosphorylates and activates Pk92B kinase. Has apparently no phosphoglycerate mutase activity. This is Serine/threonine-protein phosphatase Pgam5, mitochondrial from Drosophila ananassae (Fruit fly).